The following is a 151-amino-acid chain: Large ribosomal subunit protein bL9 (151 aa).

This sequence belongs to the bacterial ribosomal protein bL9 family.

Its function is as follows. Binds to the 23S rRNA. The chain is Large ribosomal subunit protein bL9 from Desulfotalea psychrophila (strain LSv54 / DSM 12343).